The primary structure comprises 687 residues: Putative secreted metallopeptidase (687 aa).

The signal sequence occupies residues 1–22 (MLFTSTAVAALSGALLIQPALA). 5 N-linked (GlcNAc...) asparagine glycosylation sites follow: Asn-54, Asn-114, Asn-252, Asn-256, and Asn-379.

Belongs to the peptidase M10B family.

The protein localises to the secreted. This is Putative secreted metallopeptidase from Arthroderma benhamiae (strain ATCC MYA-4681 / CBS 112371) (Trichophyton mentagrophytes).